Reading from the N-terminus, the 210-residue chain is FMN-dependent NADH:quinone oxidoreductase 8 (210 aa).

FMN is bound by residues Ser10 and 16-18; that span reads SIS.

This sequence belongs to the azoreductase type 1 family. Homodimer. FMN serves as cofactor.

The catalysed reaction is 2 a quinone + NADH + H(+) = 2 a 1,4-benzosemiquinone + NAD(+). It catalyses the reaction N,N-dimethyl-1,4-phenylenediamine + anthranilate + 2 NAD(+) = 2-(4-dimethylaminophenyl)diazenylbenzoate + 2 NADH + 2 H(+). Functionally, quinone reductase that provides resistance to thiol-specific stress caused by electrophilic quinones. In terms of biological role, also exhibits azoreductase activity. Catalyzes the reductive cleavage of the azo bond in aromatic azo compounds to the corresponding amines. This chain is FMN-dependent NADH:quinone oxidoreductase 8, found in Burkholderia lata (strain ATCC 17760 / DSM 23089 / LMG 22485 / NCIMB 9086 / R18194 / 383).